Reading from the N-terminus, the 94-residue chain is Large ribosomal subunit protein uL23 (94 aa).

The protein belongs to the universal ribosomal protein uL23 family. As to quaternary structure, part of the 50S ribosomal subunit. Contacts protein L29, and trigger factor when it is bound to the ribosome.

Its function is as follows. One of the early assembly proteins it binds 23S rRNA. One of the proteins that surrounds the polypeptide exit tunnel on the outside of the ribosome. Forms the main docking site for trigger factor binding to the ribosome. This chain is Large ribosomal subunit protein uL23, found in Geobacter sp. (strain M21).